A 446-amino-acid polypeptide reads, in one-letter code: N-succinylarginine dihydrolase (446 aa).

Substrate-binding positions include 19 to 28, N110, and 137 to 138; these read AGLSFGNVAS and HR. E174 is an active-site residue. Residue R213 participates in substrate binding. H249 is an active-site residue. Residues D251 and N364 each contribute to the substrate site. The Nucleophile role is filled by C370.

Belongs to the succinylarginine dihydrolase family. As to quaternary structure, homodimer.

The enzyme catalyses N(2)-succinyl-L-arginine + 2 H2O + 2 H(+) = N(2)-succinyl-L-ornithine + 2 NH4(+) + CO2. Its pathway is amino-acid degradation; L-arginine degradation via AST pathway; L-glutamate and succinate from L-arginine: step 2/5. Its function is as follows. Catalyzes the hydrolysis of N(2)-succinylarginine into N(2)-succinylornithine, ammonia and CO(2). This is N-succinylarginine dihydrolase from Burkholderia lata (strain ATCC 17760 / DSM 23089 / LMG 22485 / NCIMB 9086 / R18194 / 383).